The chain runs to 268 residues: MALTWTHKDRGEIRVHENLEELSIDLVDYIAEISEASIKEHGAFCIVLSGGSLISFMGKLIEPPYDKIVDWAKWYVFWADERVVAKNHDDSNYKLAKDNLLSKVNVFPRHICSINDTVSAEEAATEYEFAIRQMVRSRTVAASDNSDSPRFDLILLGMGSDGHVASLFPNHPALEVKDDWVTFLTDSHKPPPERITFTLPVINSAANVVVVATGESKANAIHLAIDDLPLPDSSLSLPARLVHPSNGNLIWFMDKQAGSKLDRFKFSE.

It belongs to the glucosamine/galactosamine-6-phosphate isomerase family. 6-phosphogluconolactonase subfamily.

The protein localises to the cytoplasm. It is found in the cytosol. The catalysed reaction is 6-phospho-D-glucono-1,5-lactone + H2O = 6-phospho-D-gluconate + H(+). It functions in the pathway carbohydrate degradation; pentose phosphate pathway; D-ribulose 5-phosphate from D-glucose 6-phosphate (oxidative stage): step 2/3. Functionally, catalyzes the hydrolysis of 6-phosphogluconolactone to 6-phosphogluconate. The protein is Probable 6-phosphogluconolactonase 1 of Arabidopsis thaliana (Mouse-ear cress).